The chain runs to 695 residues: Lupanine 17-hydroxylase [cytochrome c] (695 aa).

Residues 1–26 (MSANKNIWIIRLGVAFVCVAIGAAQA) form the signal peptide. A Cytochrome c domain is found at 598 to 677 (AMAESGRHIF…ALQAFILQKA (80 aa)). Heme c is bound by residues Cys-612, Cys-615, and His-616.

The protein belongs to the bacterial PQQ dehydrogenase family. Monomer. The cofactor is pyrroloquinoline quinone. Heme c is required as a cofactor.

Its subcellular location is the periplasm. The enzyme catalyses lupanine + 2 Fe(III)-[cytochrome c] + H2O = 17-hydroxylupanine + 2 Fe(II)-[cytochrome c] + 2 H(+). Its function is as follows. Catalyzes the first reaction in the catabolism of the alkaloid lupanine. It dehydrogenates lupanine, which can then be hydrated to produce 17-hydroxylupanine. The polypeptide is Lupanine 17-hydroxylase [cytochrome c] (luh) (Pseudomonas sp).